A 353-amino-acid chain; its full sequence is Chemerin-like receptor 2 (353 aa).

The Extracellular segment spans residues 1–41 (MEVSKEMLFEELDNYSYALDYYSQESDPEEKVYLGLVHWIS). An N-linked (GlcNAc...) asparagine glycan is attached at N14. Residues 42–62 (LFLYALAFVLGIPGNAIVIWL) traverse the membrane as a helical segment. The Cytoplasmic portion of the chain corresponds to 63 to 73 (MGFKWKKTVTT). The chain crosses the membrane as a helical span at residues 74-94 (LWFLNLAIADFIFVLFLPLYI). Residues 95-112 (SYVALSFHWPFGLWLCKV) lie on the Extracellular side of the membrane. C110 and C187 are disulfide-bonded. A helical transmembrane segment spans residues 113–133 (NSFIAQLNMFSSVFFLTVISL). Topologically, residues 134–154 (DRYIHLLHPGLSHRHRTLKSS) are cytoplasmic. Residues 155–175 (LVVVILVWLLASLLGGPTLYF) form a helical membrane-spanning segment. The Extracellular portion of the chain corresponds to 176-210 (RDTMEVNNHIICYNNFQEHELTLMRHHVLTWVKFL). A helical transmembrane segment spans residues 211–231 (FGYLFPLLTMSSCYLCLIFKM). Over 232–247 (KKRNILISRKHLWMIL) the chain is Cytoplasmic. A helical transmembrane segment spans residues 248–268 (SVVIAFLVCWTPYHLFSIWEL). Over 269–286 (SIHHNSSFQNVLQGGIPL) the chain is Extracellular. A helical transmembrane segment spans residues 287–307 (STGLAFLNSCLNPILYVLISK). Topologically, residues 308–353 (TFQARFRASVAEVLKRSLWEASCSGTVSEQLRSAETKSLSLLETAQ) are cytoplasmic.

It belongs to the chemokine-like receptor (CMKLR) family. High expressed in white adipose tissue and skeletal muscle. Expressed in hippocampus and cortex.

It localises to the cell membrane. Receptor for chemoattractant adipokine chemerin/RARRES2 suggesting a role for this receptor in the regulation of inflammation and energy homesotasis. Signals mainly via beta-arrestin pathway. Binding of RARRES2 activates weakly G proteins, calcium mobilization and MAPK1/MAPK3 (ERK1/2) phosphorylation too. Acts also as a receptor for TAFA1, mediates its effects on neuronal stem-cell proliferation and differentiation via the activation of ROCK/ERK and ROCK/STAT3 signaling pathway. This is Chemerin-like receptor 2 (Cmklr2) from Mus musculus (Mouse).